Reading from the N-terminus, the 270-residue chain is Phosphatidylglycerol--prolipoprotein diacylglyceryl transferase (270 aa).

Helical transmembrane passes span 10–30 (VAVA…LVGI), 56–76 (LIFW…VLFY), 92–112 (WKGG…AWWF), 120–140 (FFQL…AGRI), 175–195 (SQLY…NLYA), 202–222 (MAVS…VEFV), and 237–257 (VTMG…LIWL). Arginine 139 lines the a 1,2-diacyl-sn-glycero-3-phospho-(1'-sn-glycerol) pocket.

It belongs to the Lgt family.

Its subcellular location is the cell inner membrane. It carries out the reaction L-cysteinyl-[prolipoprotein] + a 1,2-diacyl-sn-glycero-3-phospho-(1'-sn-glycerol) = an S-1,2-diacyl-sn-glyceryl-L-cysteinyl-[prolipoprotein] + sn-glycerol 1-phosphate + H(+). The protein operates within protein modification; lipoprotein biosynthesis (diacylglyceryl transfer). Its function is as follows. Catalyzes the transfer of the diacylglyceryl group from phosphatidylglycerol to the sulfhydryl group of the N-terminal cysteine of a prolipoprotein, the first step in the formation of mature lipoproteins. The sequence is that of Phosphatidylglycerol--prolipoprotein diacylglyceryl transferase from Pseudomonas syringae pv. syringae (strain B728a).